Reading from the N-terminus, the 576-residue chain is Apolipoprotein N-acyltransferase 1 (576 aa).

7 helical membrane-spanning segments follow: residues 15-35, 38-58, 60-80, 92-112, 128-148, 168-188, and 204-224; these read LILC…FSFF, GVFA…TSIW, AFLW…YWIP, FVSI…FFLF, YILL…FQIF, ICGV…FLIL, and IASL…IGYI. A CN hydrolase domain is found at 236–538; that stretch reads LSVLMIQPDT…TGTRAFSIRL (303 aa). Catalysis depends on glutamate 285, which acts as the Proton acceptor. Lysine 355 is an active-site residue. Cysteine 446 acts as the Nucleophile in catalysis. A helical membrane pass occupies residues 549–569; the sequence is FGNSFLWIFCILILISRLIFV.

It belongs to the CN hydrolase family. Apolipoprotein N-acyltransferase subfamily.

It is found in the cell inner membrane. The enzyme catalyses N-terminal S-1,2-diacyl-sn-glyceryl-L-cysteinyl-[lipoprotein] + a glycerophospholipid = N-acyl-S-1,2-diacyl-sn-glyceryl-L-cysteinyl-[lipoprotein] + a 2-acyl-sn-glycero-3-phospholipid + H(+). It participates in protein modification; lipoprotein biosynthesis (N-acyl transfer). Functionally, catalyzes the phospholipid dependent N-acylation of the N-terminal cysteine of apolipoprotein, the last step in lipoprotein maturation. This is Apolipoprotein N-acyltransferase 1 from Leptospira interrogans serogroup Icterohaemorrhagiae serovar Lai (strain 56601).